We begin with the raw amino-acid sequence, 574 residues long: Sulfate adenylyltransferase (574 aa).

The tract at residues 1 to 169 (MANTPHGGVL…LEAVNKLNHY (169 aa)) is N-terminal. Positions 170–394 (DYVGLRYTPA…LRESSPPRAL (225 aa)) are catalytic. Residue Gln197 participates in sulfate binding. ATP is bound by residues 197 to 200 (QTRN) and 291 to 294 (GRDH). Catalysis depends on residues Thr198, Arg199, and Asn200. Sulfate is bound at residue Arg199. Ala295 is a binding site for sulfate. Val333 is a binding site for ATP. The segment at 395–574 (QGFTIFLTGY…LESEGYFERL (180 aa)) is allosteric regulation domain; adenylyl-sulfate kinase-like. 3'-phosphoadenylyl sulfate contacts are provided by residues 434 to 437 (DTVR), Arg451, 477 to 478 (IA), and Arg516.

In the N-terminal section; belongs to the sulfate adenylyltransferase family. The protein in the C-terminal section; belongs to the APS kinase family. As to quaternary structure, homohexamer. Dimer of trimers.

The protein localises to the cytoplasm. The enzyme catalyses sulfate + ATP + H(+) = adenosine 5'-phosphosulfate + diphosphate. It participates in sulfur metabolism; hydrogen sulfide biosynthesis; sulfite from sulfate: step 1/3. With respect to regulation, allosterically inhibited by 3'-phosphoadenosine 5'-phosphosulfate (PAPS). Catalyzes the first intracellular reaction of sulfate assimilation, forming adenosine-5'-phosphosulfate (APS) from inorganic sulfate and ATP. Plays an important role in sulfate activation as a component of the biosynthesis pathway of sulfur-containing amino acids. In Emericella nidulans (strain FGSC A4 / ATCC 38163 / CBS 112.46 / NRRL 194 / M139) (Aspergillus nidulans), this protein is Sulfate adenylyltransferase.